The chain runs to 92 residues: Small ribosomal subunit protein uS15c (92 aa).

Belongs to the universal ribosomal protein uS15 family. As to quaternary structure, part of the 30S ribosomal subunit.

It localises to the plastid. The protein localises to the chloroplast. The chain is Small ribosomal subunit protein uS15c (rps15) from Guizotia abyssinica (Niger).